A 642-amino-acid polypeptide reads, in one-letter code: Stress-activated map kinase-interacting protein 1 homolog (642 aa).

The CRIM domain occupies 189-314; it reads ARIREVIGYC…EREPLFQGLL (126 aa). Residues 603–642 are disordered; it reads IVSPSSDAPSRSSNGKNGGKFRKMSSLMASVMGRRKSDSK. A compositionally biased stretch (low complexity) spans 605–615; that stretch reads SPSSDAPSRSS.

The protein belongs to the SIN1 family. As to quaternary structure, component of the target of rapamycin complex 2 (TORC2).

In terms of biological role, component of the target of rapamycin complex 2 (TORC2), which transduces signals from growth factors to pathways involved in proliferation, cytoskeletal organization and anabolic output. In response to growth factors, TORC2 phosphorylates and activates AGC protein kinase family members, such as Akt1. Within the TORC2 complex, sinh-1 acts as a substrate adapter which recognizes and binds AGC protein kinase family members for phosphorylation by mTor. In Caenorhabditis elegans, this protein is Stress-activated map kinase-interacting protein 1 homolog (sinh-1).